Reading from the N-terminus, the 295-residue chain is Glutamate 5-kinase (295 aa).

ATP is bound at residue lysine 9. Substrate is bound by residues serine 49, aspartate 136, and asparagine 148. Residues 168–169 (TD) and 210–216 (TGGMLTK) contribute to the ATP site.

Belongs to the glutamate 5-kinase family.

It localises to the cytoplasm. It carries out the reaction L-glutamate + ATP = L-glutamyl 5-phosphate + ADP. The protein operates within amino-acid biosynthesis; L-proline biosynthesis; L-glutamate 5-semialdehyde from L-glutamate: step 1/2. Catalyzes the transfer of a phosphate group to glutamate to form L-glutamate 5-phosphate. This is Glutamate 5-kinase from Neisseria gonorrhoeae (strain NCCP11945).